A 487-amino-acid chain; its full sequence is Protein nucleotidyltransferase YdiU (487 aa).

ATP contacts are provided by G92, R95, K106, D118, G119, R169, and R176. D253 acts as the Proton acceptor in catalysis. N254 and D263 together coordinate Mg(2+). D263 lines the ATP pocket.

It belongs to the SELO family. It depends on Mg(2+) as a cofactor. The cofactor is Mn(2+).

It carries out the reaction L-seryl-[protein] + ATP = 3-O-(5'-adenylyl)-L-seryl-[protein] + diphosphate. The catalysed reaction is L-threonyl-[protein] + ATP = 3-O-(5'-adenylyl)-L-threonyl-[protein] + diphosphate. The enzyme catalyses L-tyrosyl-[protein] + ATP = O-(5'-adenylyl)-L-tyrosyl-[protein] + diphosphate. It catalyses the reaction L-histidyl-[protein] + UTP = N(tele)-(5'-uridylyl)-L-histidyl-[protein] + diphosphate. It carries out the reaction L-seryl-[protein] + UTP = O-(5'-uridylyl)-L-seryl-[protein] + diphosphate. The catalysed reaction is L-tyrosyl-[protein] + UTP = O-(5'-uridylyl)-L-tyrosyl-[protein] + diphosphate. Its function is as follows. Nucleotidyltransferase involved in the post-translational modification of proteins. It can catalyze the addition of adenosine monophosphate (AMP) or uridine monophosphate (UMP) to a protein, resulting in modifications known as AMPylation and UMPylation. This Bordetella pertussis (strain Tohama I / ATCC BAA-589 / NCTC 13251) protein is Protein nucleotidyltransferase YdiU.